The following is a 63-amino-acid chain: Large ribosomal subunit protein bL28 (63 aa).

A disordered region spans residues 1–22; it reads MSRRCAITGKSAMNGHSVSHAN.

This sequence belongs to the bacterial ribosomal protein bL28 family.

This is Large ribosomal subunit protein bL28 from Campylobacter hominis (strain ATCC BAA-381 / DSM 21671 / CCUG 45161 / LMG 19568 / NCTC 13146 / CH001A).